A 502-amino-acid polypeptide reads, in one-letter code: Nucleolar GTP-binding protein 2 (502 aa).

The tract at residues 1 to 20 (MGTAKKEQQRRIREGNTKDG) is disordered. A CP-type G domain is found at 211–372 (WNELYKVIDS…LIDCPGIVPP (162 aa)). Residues 321 to 328 (GYPNTGKS) and 365 to 369 (DCPGI) each bind GTP. Positions 459–502 (GKIPWFVSPPDRDPQPETSKRPADSEPETAQEAPEPPANKRLRV) are disordered. Basic and acidic residues predominate over residues 468–482 (PDRDPQPETSKRPAD).

This sequence belongs to the TRAFAC class YlqF/YawG GTPase family. NOG2 subfamily.

Its subcellular location is the nucleus. It is found in the nucleolus. In terms of biological role, GTPase that associates with pre-60S ribosomal subunits in the nucleolus and is required for their nuclear export and maturation. The protein is Nucleolar GTP-binding protein 2 (NOG2) of Eremothecium gossypii (strain ATCC 10895 / CBS 109.51 / FGSC 9923 / NRRL Y-1056) (Yeast).